Consider the following 1145-residue polypeptide: Error-prone DNA polymerase (1145 aa).

The protein belongs to the DNA polymerase type-C family. DnaE2 subfamily.

It is found in the cytoplasm. The enzyme catalyses DNA(n) + a 2'-deoxyribonucleoside 5'-triphosphate = DNA(n+1) + diphosphate. Its function is as follows. DNA polymerase involved in damage-induced mutagenesis and translesion synthesis (TLS). It is not the major replicative DNA polymerase. The polypeptide is Error-prone DNA polymerase (Rhodopirellula baltica (strain DSM 10527 / NCIMB 13988 / SH1)).